Here is a 2570-residue protein sequence, read N- to C-terminus: Highly reducing polyketide synthase tstA (2570 aa).

Positions 16–443 (AMPIAVVGIG…GANAHVVLEN (428 aa)) constitute a Ketosynthase family 3 (KS3) domain. Residues cysteine 191, histidine 326, and histidine 366 each act as for beta-ketoacyl synthase activity in the active site. Positions 458–478 (HTRKSATESSGTSTPSNPGPH) are disordered. Residues 464–478 (TESSGTSTPSNPGPH) are compositionally biased toward low complexity. The region spanning 567 to 898 (FVFTGQGAQW…YSALVRNKNA (332 aa)) is the Malonyl-CoA:ACP transacylase (MAT) domain. Residues 965–1103 (TDLLGVLERN…GLVSVVAPQK (139 aa)) are N-terminal hotdog fold. Residues 965 to 1293 (TDLLGVLERN…CATLAREGAD (329 aa)) enclose the PKS/mFAS DH domain. Residue histidine 997 is the Proton acceptor; for dehydratase activity of the active site. The interval 1133-1293 (RRNINVPQFY…CATLAREGAD (161 aa)) is C-terminal hotdog fold. The Proton donor; for dehydratase activity role is filled by aspartate 1198. Positions 1343–1645 (LERAAYYMLK…IATSINSNNY (303 aa)) are methyltransferase (CMeT) domain. The Enoyl reductase (ER) domain maps to 1866–2178 (GLLDSIFWTD…TGGHMGKLVG (313 aa)). The 178-residue stretch at 2202–2379 (ASYVLIGGLG…ATTIDLGAIS (178 aa)) folds into the Ketoreductase (KR) domain. The region spanning 2482–2559 (DASELILGAL…HLATKIAQRS (78 aa)) is the Carrier domain. Serine 2519 carries the post-translational modification O-(pantetheine 4'-phosphoryl)serine.

Requires pantetheine 4'-phosphate as cofactor.

It functions in the pathway secondary metabolite biosynthesis. Functionally, highly reducing polyketide synthase; part of the gene cluster that mediates the biosynthesis of the antihypercholesterolemic agents phomoidrides which are dimeric anhydrides. The pathway begins with the highly reducing polyketide synthase tstA that catalyzes the formation of a C12-fatty acyl-ACP, starting from one acetate and 5 malonate units. The hydrolase tstM is involved in the release of the C12-fatty acyl chain from tstA. The alkylcitrate synthase (ACS) tstJ and the alkylcitrate dehydratase (ACDH) tstI then give rise to decarboxylated monomeric anhydrides by coupling the C12-fatty acyl chain with oxalacetic acid. The cyclase tstC is responsible for the dimerization of the monomeric anhydrides which leads to the production of prephomoidride that contains the characteristic bicyclo[4.3.1]deca-1,6-diene system of phomoidrides. Iterative oxidation catalyzed by the alpha-ketoglutarate-dependent dioxygenase tstK produced then phomoidride A. Finally, the methyltransferase tstE converts phomoidride A to phomoidride B via an acetalization reaction. The phosphatidylethanolamine-binding protein tstB and tstN are not essential for dimerization and their functions have still to be determined. The polypeptide is Highly reducing polyketide synthase tstA (Talaromyces stipitatus (strain ATCC 10500 / CBS 375.48 / QM 6759 / NRRL 1006) (Penicillium stipitatum)).